Reading from the N-terminus, the 204-residue chain is Protease (204 aa).

Active-site residues include His54, Asp71, and Cys122.

It belongs to the peptidase C5 family. As to quaternary structure, interacts with protease cofactor pVI-C; this interaction is necessary for protease activation.

The protein resides in the virion. It localises to the host nucleus. The catalysed reaction is Cleaves proteins of the adenovirus and its host cell at two consensus sites: -Yaa-Xaa-Gly-Gly-|-Xaa- and -Yaa-Xaa-Gly-Xaa-|-Gly- (in which Yaa is Met, Ile or Leu, and Xaa is any amino acid).. With respect to regulation, requires DNA and protease cofactor for maximal activation. Inside nascent virions, becomes partially activated by binding to the viral DNA, allowing it to cleave the cofactor that binds to the protease and fully activates it. Actin, like the viral protease cofactor, seems to act as a cofactor in the cleavage of cytokeratin 18 and of actin itself. Cleaves viral precursor proteins (pTP, pIIIa, pVI, pVII, pVIII, and pX) inside newly assembled particles giving rise to mature virions. Protease complexed to its cofactor slides along the viral DNA to specifically locate and cleave the viral precursors. Mature virions have a weakened organization compared to the unmature virions, thereby facilitating subsequent uncoating. Without maturation, the particle lacks infectivity and is unable to uncoat. Late in adenovirus infection, in the cytoplasm, may participate in the cytoskeleton destruction. Cleaves host cell cytoskeletal keratins K7 and K18. The polypeptide is Protease (Bos taurus (Bovine)).